A 296-amino-acid chain; its full sequence is Cell division protein DivIB (296 aa).

The Cytoplasmic segment spans residues 1–29 (MTKEIPKINNEYLKEKRKKQRIQQRRVQR). The chain crosses the membrane as a helical span at residues 30-50 (MIVGILVVIVLLILVYMFTPI). One can recognise a POTRA domain in the interval 51–119 (SHIKSADIKG…NPIEVNVKEH (69 aa)). Topologically, residues 51–296 (SHIKSADIKG…NKIKDEESSE (246 aa)) are extracellular. Residues 256-273 (NNGQTSSASAKEVQSGTA) show a composition bias toward polar residues. The segment at 256–296 (NNGQTSSASAKEVQSGTASEDKAKDDLQKALNKIKDEESSE) is disordered. Residues 274-296 (SEDKAKDDLQKALNKIKDEESSE) show a composition bias toward basic and acidic residues.

The protein belongs to the FtsQ/DivIB family. DivIB subfamily.

It is found in the cell membrane. Cell division protein that may be involved in stabilizing or promoting the assembly of the division complex. The sequence is that of Cell division protein DivIB from Staphylococcus pseudintermedius (strain HKU10-03).